We begin with the raw amino-acid sequence, 319 residues long: uncharacterized protein (319 aa).

9 helical membrane passes run 11–31, 43–63, 83–103, 108–128, 134–154, 195–215, 220–240, 260–280, and 284–304; these read GLWA…LGVF, ALGW…GVWW, LSVD…IPAL, VLFW…FAGV, FHWL…KLFL, LATP…LFAL, AIFA…FAIL, KVGL…IDFV, and PEVS…ASLI.

This sequence belongs to the TerC family.

It localises to the cell membrane. This is an uncharacterized protein from Myxococcus xanthus.